The primary structure comprises 291 residues: 3-hydroxy-5-phosphonooxypentane-2,4-dione thiolase (291 aa).

K203 functions as the Schiff-base intermediate with substrate in the catalytic mechanism.

This sequence belongs to the DeoC/FbaB aldolase family. In terms of assembly, homodecamer.

The protein resides in the cytoplasm. It carries out the reaction dihydroxyacetone phosphate + acetyl-CoA = 3-hydroxy-2,4-dioxopentyl phosphate + CoA. In terms of biological role, involved in the degradation of phospho-AI-2, thereby terminating induction of the lsr operon and closing the AI-2 signaling cycle. Catalyzes the transfer of an acetyl moiety from 3-hydroxy-5-phosphonooxypentane-2,4-dione to CoA to form glycerone phosphate and acetyl-CoA. This is 3-hydroxy-5-phosphonooxypentane-2,4-dione thiolase from Yersinia pestis bv. Antiqua (strain Antiqua).